A 114-amino-acid chain; its full sequence is Ribosome-binding factor A (114 aa).

Belongs to the RbfA family. Monomer. Binds 30S ribosomal subunits, but not 50S ribosomal subunits or 70S ribosomes.

It localises to the cytoplasm. Its function is as follows. One of several proteins that assist in the late maturation steps of the functional core of the 30S ribosomal subunit. Associates with free 30S ribosomal subunits (but not with 30S subunits that are part of 70S ribosomes or polysomes). Required for efficient processing of 16S rRNA. May interact with the 5'-terminal helix region of 16S rRNA. The polypeptide is Ribosome-binding factor A (Listeria welshimeri serovar 6b (strain ATCC 35897 / DSM 20650 / CCUG 15529 / CIP 8149 / NCTC 11857 / SLCC 5334 / V8)).